The following is a 207-amino-acid chain: Small ribosomal subunit protein uS2 (207 aa).

Belongs to the universal ribosomal protein uS2 family.

This is Small ribosomal subunit protein uS2 from Methanocella arvoryzae (strain DSM 22066 / NBRC 105507 / MRE50).